The chain runs to 1176 residues: Translation initiation factor IF-2 (1176 aa).

4 stretches are compositionally biased toward low complexity: residues 32–44, 57–79, 94–166, and 193–235; these read IAAKSHSSSISDS, ASPSQPTAPAAKPAPAKPAAGKS, APVA…AAPS, and KPTP…VKPT. Disordered regions lie at residues 32-502 and 535-567; these read IAAK…QRQK and RPAKPKAQQRTAPKPVAAVRKRRKETARQRQRR. Pro residues predominate over residues 251-270; the sequence is APPPASTPRPAPSRPTPRPA. Composition is skewed to low complexity over residues 388–409 and 439–469; these read GRPGAPTRPGAPTRPGMPGGMR and NRPTEAAGTATPPVARPTAPSAPRRPGFRPG. Positions 478 to 492 are enriched in basic and acidic residues; that stretch reads GRPDWDDSAKLEALR. Residues 553 to 567 show a composition bias toward basic residues; the sequence is VRKRRKETARQRQRR. The 173-residue stretch at 668–840 folds into the tr-type G domain; the sequence is RRPPVVTVMG…LLLVTEVEDL (173 aa). Positions 677–684 are G1; that stretch reads GHVDHGKT. 677-684 contacts GTP; it reads GHVDHGKT. Positions 702-706 are G2; it reads GITQH. Residues 727-730 are G3; it reads DTPG. GTP is bound by residues 727 to 731 and 781 to 784; these read DTPGH and NKID. Positions 781–784 are G4; it reads NKID. Positions 817-819 are G5; the sequence is SAI.

The protein belongs to the TRAFAC class translation factor GTPase superfamily. Classic translation factor GTPase family. IF-2 subfamily.

The protein localises to the cytoplasm. Functionally, one of the essential components for the initiation of protein synthesis. Protects formylmethionyl-tRNA from spontaneous hydrolysis and promotes its binding to the 30S ribosomal subunits. Also involved in the hydrolysis of GTP during the formation of the 70S ribosomal complex. The polypeptide is Translation initiation factor IF-2 (Synechococcus sp. (strain CC9902)).